We begin with the raw amino-acid sequence, 107 residues long: Iron-sulfur cluster assembly protein CyaY (107 aa).

This sequence belongs to the frataxin family.

Involved in iron-sulfur (Fe-S) cluster assembly. May act as a regulator of Fe-S biogenesis. This is Iron-sulfur cluster assembly protein CyaY from Yersinia intermedia.